A 105-amino-acid polypeptide reads, in one-letter code: Ferredoxin (105 aa).

[3Fe-4S] cluster-binding residues include Cys-8 and Cys-16. Residues Cys-20, Cys-39, Cys-42, and Cys-45 each contribute to the [4Fe-4S] cluster site. The 4Fe-4S ferredoxin-type domain maps to 30–59; sequence RSLYIHPDECVDCGACEPVCPVEAIFYEDD. [3Fe-4S] cluster is bound at residue Cys-49.

Requires [4Fe-4S] cluster as cofactor. [3Fe-4S] cluster is required as a cofactor.

Ferredoxins are iron-sulfur proteins that transfer electrons in a wide variety of metabolic reactions. Its function is as follows. Putative electron transport protein for the cytochrome P-450SOY system from the same organism. The protein is Ferredoxin of Streptomyces griseus.